Reading from the N-terminus, the 198-residue chain is Ribonuclease HII (198 aa).

Residues 10 to 198 form the RNase H type-2 domain; it reads HLVAGVDEVG…PVKRALGLVS (189 aa). A divalent metal cation contacts are provided by aspartate 16, glutamate 17, and aspartate 108.

It belongs to the RNase HII family. It depends on Mn(2+) as a cofactor. Requires Mg(2+) as cofactor.

It localises to the cytoplasm. It catalyses the reaction Endonucleolytic cleavage to 5'-phosphomonoester.. Its function is as follows. Endonuclease that specifically degrades the RNA of RNA-DNA hybrids. The polypeptide is Ribonuclease HII (Salmonella schwarzengrund (strain CVM19633)).